The chain runs to 468 residues: Peripherin (468 aa).

The span at 1 to 16 shows a compositional bias: low complexity; the sequence is MSHHSSGLRSSISSTS. Residues 1–22 form a disordered region; it reads MSHHSSGLRSSISSTSYRRTFG. A head region spans residues 1–96; it reads MSHHSSGLRS…FLATRSNEKQ (96 aa). 3'-nitrotyrosine is present on Y17. Phosphoserine is present on residues S28, S50, and S59. An IF rod domain is found at 94-404; it reads EKQELQELND…KLLEGEESRI (311 aa). The coil 1A stretch occupies residues 97 to 129; the sequence is ELQELNDRFANFIEKVRFLEQQNAALRGELSQA. The interval 130-140 is linker 1; the sequence is RGQEPARADQL. The segment at 141–236 is coil 1B; sequence CQQELRELRR…KLHEEELRDL (96 aa). The linker 2 stretch occupies residues 237 to 259; it reads QVSVESQQVQQVEVEATVKPELT. The segment at 260-402 is coil 2; that stretch reads AALRDIRAQY…YRKLLEGEES (143 aa). Y376 is modified (3'-nitrotyrosine). Positions 403–468 are tail; sequence RISVPVHSFA…ELDKSSIHSY (66 aa). The segment at 445–468 is disordered; it reads GEKVVTESQKEQHSELDKSSIHSY. The residue at position 468 (Y468) is a Phosphotyrosine.

It belongs to the intermediate filament family. Forms homodimers (in vitro). Homopolymerizes into a filamentous network (in vitro). Forms heterodimers with NEFL, NEFM or NEFH (in vitro). Interacts with DST (via C-terminus). Interacts with RAB7A; the interaction is direct. Interacts with PRKCE (via phorbol-ester/DAG-type 2 domain). Phosphorylated; phosphorylation increases after nerve injury in regenerating neurons. As to expression, expressed in hypoglossal motor neurons (at protein level). Expressed in the small and large sensory neurons of the dorsal root ganglion (at protein level). Expressed in cutaneous and muscular sensory neurons.

The protein resides in the cytoplasm. The protein localises to the cytoskeleton. Its subcellular location is the cell projection. It is found in the axon. It localises to the perikaryon. In terms of biological role, class-III neuronal intermediate filament protein. My form an independent structural network without the involvement of other neurofilaments or may cooperate with the neuronal intermediate filament proteins NEFL, NEFH, NEFM and INA to form a filamentous network. Assembly of the neuronal intermediate filaments may be regulated by RAB7A. Plays a role in the development of unmyelinated sensory neurons. May be involved in axon elongation and axon regeneration after injury. Inhibits neurite extension in type II spiral ganglion neurons in the cochlea. The polypeptide is Peripherin (Prph) (Rattus norvegicus (Rat)).